Consider the following 649-residue polypeptide: Nitrosuccinic acid synthase npaA (649 aa).

The protein belongs to the nitrosuccinic acid synthase family. The cofactor is FAD.

It catalyses the reaction L-aspartate + 3 NADPH + 3 O2 + 2 H(+) = 2-nitrobutanedioate + 3 NADP(+) + 4 H2O. The protein operates within mycotoxin biosynthesis. In terms of biological role, nitrosuccinic acid synthase; part of the gene cluster that mediates the biosynthesis of the deadly neurotoxic nitroalkane 3-nitropropanoic acid (3-NPA) that acts as an antimetabolite of succinate and irreversibly inhibits succinate dehydrogenase and disrupts mitochondrial oxidative phosphorylation. NpaA catalyzes the iterative oxidation of L-aspartic acid to nitrosuccinic acid (2-nitrobutanedioate). Alternative amino acid substrates such as L-glutamate and D-aspartate are not accepted by npaA as a substrate, showing the strict substrate specificity toward L-aspartate. The nitrosuccinic acid decarboxylase npaB then facilitates decarboxylation of Nitrosuccinic acid to produce 3-NPA. This chain is Nitrosuccinic acid synthase npaA, found in Aspergillus oryzae (strain ATCC 42149 / RIB 40) (Yellow koji mold).